The following is a 457-amino-acid chain: Ribosomal protein uS12 methylthiotransferase RimO (457 aa).

Residues 6 to 116 (PKVGFVSLGC…VMEAVHAALP (111 aa)) form the MTTase N-terminal domain. [4Fe-4S] cluster is bound by residues C15, C51, C80, C147, C151, and C154. The Radical SAM core domain occupies 133–370 (LTPRHYAYLK…MARQAEISAA (238 aa)). In terms of domain architecture, TRAM spans 373–441 (EAKIGSVQQC…EHDLFGDALP (69 aa)).

The protein belongs to the methylthiotransferase family. RimO subfamily. Requires [4Fe-4S] cluster as cofactor.

The protein resides in the cytoplasm. It carries out the reaction L-aspartate(89)-[ribosomal protein uS12]-hydrogen + (sulfur carrier)-SH + AH2 + 2 S-adenosyl-L-methionine = 3-methylsulfanyl-L-aspartate(89)-[ribosomal protein uS12]-hydrogen + (sulfur carrier)-H + 5'-deoxyadenosine + L-methionine + A + S-adenosyl-L-homocysteine + 2 H(+). Catalyzes the methylthiolation of an aspartic acid residue of ribosomal protein uS12. The chain is Ribosomal protein uS12 methylthiotransferase RimO from Xanthomonas campestris pv. campestris (strain 8004).